A 275-amino-acid chain; its full sequence is 4-diphosphocytidyl-2-C-methyl-D-erythritol kinase (275 aa).

The active site involves Lys-15. Residue 97 to 107 (PMGSGLGGGSS) coordinates ATP. Asp-137 is an active-site residue.

Belongs to the GHMP kinase family. IspE subfamily.

It catalyses the reaction 4-CDP-2-C-methyl-D-erythritol + ATP = 4-CDP-2-C-methyl-D-erythritol 2-phosphate + ADP + H(+). It participates in isoprenoid biosynthesis; isopentenyl diphosphate biosynthesis via DXP pathway; isopentenyl diphosphate from 1-deoxy-D-xylulose 5-phosphate: step 3/6. Its function is as follows. Catalyzes the phosphorylation of the position 2 hydroxy group of 4-diphosphocytidyl-2C-methyl-D-erythritol. This is 4-diphosphocytidyl-2-C-methyl-D-erythritol kinase from Pseudothermotoga lettingae (strain ATCC BAA-301 / DSM 14385 / NBRC 107922 / TMO) (Thermotoga lettingae).